The following is a 364-amino-acid chain: WAT1-related protein At3g30340 (364 aa).

Helical transmembrane passes span 9 to 29 (WKAV…NVMF), 41 to 61 (VATT…AIFL), 76 to 96 (SLFF…LIGL), 102 to 122 (TFSL…ALVF), 138 to 158 (LLGT…KGTA), 183 to 203 (WAMG…WFIV), 215 to 235 (YTST…LSLI), 251 to 271 (VLAL…GMSW), 277 to 297 (GAVF…IFSF), and 304 to 324 (IYCG…ILLW). 2 EamA domains span residues 26–152 (NVMF…LVLT) and 195–323 (IIWS…YILL).

It belongs to the drug/metabolite transporter (DMT) superfamily. Plant drug/metabolite exporter (P-DME) (TC 2.A.7.4) family.

It is found in the membrane. This is WAT1-related protein At3g30340 from Arabidopsis thaliana (Mouse-ear cress).